We begin with the raw amino-acid sequence, 396 residues long: Vacuolar protease A (396 aa).

A signal peptide spans 1–17 (MKGALLTAAMLLGSAQA). Positions 18 to 70 (GVHTMKLKKVPLAEQLESVPIDVQVQHLGQKYTGLRTESHTQAMFKATDAQVS) are cleaved as a propeptide — activation peptide. Residues 85 to 392 (YFSEITIGTP…DLGADTVGIA (308 aa)) form the Peptidase A1 domain. The active site involves Asp-103. Cys-116 and Cys-121 form a disulfide bridge. Asn-138 is a glycosylation site (N-linked (GlcNAc...) asparagine). Residue Asp-284 is part of the active site. The cysteines at positions 318 and 351 are disulfide-linked. Residue Asn-335 is glycosylated (N-linked (GlcNAc...) asparagine).

Belongs to the peptidase A1 family.

The protein localises to the vacuole. This is Vacuolar protease A (pep-4) from Neurospora crassa (strain ATCC 24698 / 74-OR23-1A / CBS 708.71 / DSM 1257 / FGSC 987).